The sequence spans 389 residues: Abscission/NoCut checkpoint regulator (389 aa).

The segment at 1-58 (MESRCYGCAVKFTLFKKEYGCKNCGRAFCNGCLSFSALVPRAGNTQQKVCKQCHTILT) adopts an FYVE-type zinc-finger fold. Residues Cys5, Cys8, Cys21, Cys24, Cys29, Cys32, Cys50, and Cys53 each contribute to the Zn(2+) site. A Phosphoserine modification is found at Ser69. An MIM1-A motif is present at residues 99–112 (DQAIAERLARLRQE). A Glycyl lysine isopeptide (Lys-Gly) (interchain with G-Cter in SUMO2) cross-link involves residue Lys132. Disordered stretches follow at residues 158–177 (PSHT…QAQQ) and 204–227 (QNDL…SQSL). The span at 167–177 (QAPDTRTQAQQ) shows a compositional bias: low complexity. Residues 214–226 (SQRTNSQGQASQS) show a composition bias toward polar residues. A Phosphoserine modification is found at Ser219. Positions 226–261 (SLEEEKYKLLAEAAVELQEENTRQERILALAKRLAV) form a coiled coil. The short motif at 252–265 (ILALAKRLAVLKGQ) is the MIM1-B element. Ser280 carries the post-translational modification Phosphoserine.

In terms of assembly, interacts (via MIM1-B) with VPS4A; interaction takes place at the midbody ring following cytokinesis checkpoint activation.

The protein resides in the cytoplasm. It localises to the cytoskeleton. Its subcellular location is the microtubule organizing center. It is found in the centrosome. The protein localises to the cleavage furrow. The protein resides in the midbody. It localises to the midbody ring. In terms of biological role, key regulator of abscission step in cytokinesis: part of the cytokinesis checkpoint, a process required to delay abscission to prevent both premature resolution of intercellular chromosome bridges and accumulation of DNA damage. Together with CHMP4C, required to retain abscission-competent VPS4 (VPS4A and/or VPS4B) at the midbody ring until abscission checkpoint signaling is terminated at late cytokinesis. Deactivation of AURKB results in dephosphorylation of CHMP4C followed by its dissociation from ZFYVE19/ANCHR and VPS4 and subsequent abscission. The protein is Abscission/NoCut checkpoint regulator (Zfyve19) of Mus musculus (Mouse).